A 197-amino-acid polypeptide reads, in one-letter code: MLERLALTLAHQVKALNAEETESVEVLTFGFTIILHYLFTLLLVLAVGLLHGEIWLFLQIALSFTFMRVLTGGAHLDHSIGCTLLSVLFITAISWVPFANNYAWILYGISGGLLIWKYAPYYEAHQVVHTEHWERRKKRIAYILIVLFIILAMLMSTQGLVLGVLLQGVLLTPIGLKVTRQLNRFILKGGETNEENS.

A run of 4 helical transmembrane segments spans residues 29–49 (FGFT…AVGL), 79–99 (SIGC…VPFA), 102–122 (YAWI…APYY), and 143–163 (ILIV…LVLG).

It belongs to the AgrB family.

The protein resides in the cell membrane. Its function is as follows. May be involved in the proteolytic processing of a quorum sensing system signal molecule precursor. This chain is Putative AgrB-like protein, found in Halalkalibacterium halodurans (strain ATCC BAA-125 / DSM 18197 / FERM 7344 / JCM 9153 / C-125) (Bacillus halodurans).